The sequence spans 262 residues: Indole-3-glycerol phosphate synthase (262 aa).

This sequence belongs to the TrpC family.

It catalyses the reaction 1-(2-carboxyphenylamino)-1-deoxy-D-ribulose 5-phosphate + H(+) = (1S,2R)-1-C-(indol-3-yl)glycerol 3-phosphate + CO2 + H2O. The protein operates within amino-acid biosynthesis; L-tryptophan biosynthesis; L-tryptophan from chorismate: step 4/5. In Clostridium acetobutylicum (strain ATCC 824 / DSM 792 / JCM 1419 / IAM 19013 / LMG 5710 / NBRC 13948 / NRRL B-527 / VKM B-1787 / 2291 / W), this protein is Indole-3-glycerol phosphate synthase.